Here is a 35-residue protein sequence, read N- to C-terminus: Conotoxin M11.2 (35 aa).

4 cysteine pairs are disulfide-bonded: Cys-2/Cys-16, Cys-9/Cys-21, Cys-15/Cys-26, and Cys-20/Cys-33.

It belongs to the conotoxin I1 superfamily. Expressed by the venom duct.

It is found in the secreted. This chain is Conotoxin M11.2, found in Conus magus (Magical cone).